Reading from the N-terminus, the 2344-residue chain is Pecanex-like protein 1 (2344 aa).

Transmembrane regions (helical) follow at residues 33 to 53 (ALHL…YMAL) and 57 to 77 (MIIV…LKMV). Disordered regions lie at residues 101–163 (QRAK…GSSR), 271–290 (SHSY…SSSA), 306–692 (QQQR…TRAR), and 749–837 (VTRS…VQSR). Over residues 143 to 163 (SSRNSYAGLDPSNQIGSGSSR) the composition is skewed to polar residues. Residues 272–282 (HSYRKEHRPRG) show a composition bias toward basic residues. The span at 328–343 (RESSAGKSCPPAQSQP) shows a compositional bias: polar residues. The span at 372–390 (SLRSLSTRSSGSTESYCSG) shows a compositional bias: low complexity. Positions 396–406 (NSTLSSYKSEQ) are enriched in polar residues. Basic and acidic residues-rich tracts occupy residues 416–458 (LSEH…DKTA), 508–522 (RPPE…EQSE), and 531–547 (RVCK…DVRP). Positions 557 to 572 (TSAHKPGRRRTGKKRA) are enriched in basic residues. The span at 616-638 (SIHSAHQFSSDSSSSATSHSCQS) shows a compositional bias: low complexity. Over residues 749-758 (VTRSRNSLPS) the composition is skewed to polar residues. Composition is skewed to low complexity over residues 770-781 (AATGAAQASEEA) and 817-835 (LSLQ…VKVQ). 3 helical membrane-spanning segments follow: residues 1010–1030 (ILAV…LIQG), 1035–1055 (IWVF…LKSV), and 1069–1089 (IIAY…WLLD). Residue asparagine 1094 is glycosylated (N-linked (GlcNAc...) asparagine). Residues 1119–1139 (LVIVFTLCFPIVFFIGLLPQV) traverse the membrane as a helical segment. N-linked (GlcNAc...) asparagine glycosylation occurs at asparagine 1158. 4 helical membrane passes run 1163 to 1183 (LLAA…LYGL), 1196 to 1216 (HVPV…YHLS), 1269 to 1289 (LVVC…TVFT), and 1297 to 1317 (YVLY…LPQV). Residues asparagine 1582, asparagine 1723, asparagine 1985, and asparagine 2075 are each glycosylated (N-linked (GlcNAc...) asparagine). The segment at 2051–2123 (EDSDTGGGTS…SSLVRQSPAR (73 aa)) is disordered. Polar residues-rich tracts occupy residues 2061–2081 (CPGN…QGST) and 2095–2118 (PTTS…SLVR). 3 N-linked (GlcNAc...) asparagine glycosylation sites follow: asparagine 2231, asparagine 2237, and asparagine 2263.

The protein belongs to the pecanex family.

It is found in the membrane. This is Pecanex-like protein 1 from Mus musculus (Mouse).